The sequence spans 267 residues: 5'-nucleotidase SurE (267 aa).

Residues D9, D10, S40, and N97 each coordinate a divalent metal cation.

The protein belongs to the SurE nucleotidase family. It depends on a divalent metal cation as a cofactor.

It localises to the cytoplasm. It catalyses the reaction a ribonucleoside 5'-phosphate + H2O = a ribonucleoside + phosphate. Functionally, nucleotidase that shows phosphatase activity on nucleoside 5'-monophosphates. The sequence is that of 5'-nucleotidase SurE from Helicobacter pylori (strain G27).